A 219-amino-acid polypeptide reads, in one-letter code: Adenylate kinase (219 aa).

10–15 (GAGKGT) contributes to the ATP binding site. The NMP stretch occupies residues 30–59 (ATGDLFRANISQGTDLGKQARAYMDAGQLV). AMP is bound by residues Thr-31, Arg-36, 57-59 (QLV), 85-88 (GFPR), and Gln-92. Residues 126–164 (GRRVCRNNSAHVFHLTYNPPKAEGVCDACGGELYQRDDD) are LID. ATP-binding positions include Arg-127 and 137–138 (VF). AMP contacts are provided by Arg-161 and Arg-172. Gly-200 is a binding site for ATP.

This sequence belongs to the adenylate kinase family. As to quaternary structure, monomer.

It localises to the cytoplasm. The catalysed reaction is AMP + ATP = 2 ADP. Its pathway is purine metabolism; AMP biosynthesis via salvage pathway; AMP from ADP: step 1/1. Functionally, catalyzes the reversible transfer of the terminal phosphate group between ATP and AMP. Plays an important role in cellular energy homeostasis and in adenine nucleotide metabolism. The sequence is that of Adenylate kinase from Streptomyces griseus subsp. griseus (strain JCM 4626 / CBS 651.72 / NBRC 13350 / KCC S-0626 / ISP 5235).